The following is a 230-amino-acid chain: 2,3-bisphosphoglycerate-dependent phosphoglycerate mutase (230 aa).

Residues 10–17, 23–24, arginine 62, 89–92, lysine 100, 116–117, and 185–186 contribute to the substrate site; these read RHGESKWN, TG, ERNY, RR, and GN. The active-site Tele-phosphohistidine intermediate is histidine 11. Glutamate 89 (proton donor/acceptor) is an active-site residue.

This sequence belongs to the phosphoglycerate mutase family. BPG-dependent PGAM subfamily. Homodimer.

It catalyses the reaction (2R)-2-phosphoglycerate = (2R)-3-phosphoglycerate. It participates in carbohydrate degradation; glycolysis; pyruvate from D-glyceraldehyde 3-phosphate: step 3/5. In terms of biological role, catalyzes the interconversion of 2-phosphoglycerate and 3-phosphoglycerate. This is 2,3-bisphosphoglycerate-dependent phosphoglycerate mutase from Buchnera aphidicola subsp. Cinara cedri (strain Cc).